The following is a 269-amino-acid chain: Indole-3-glycerol phosphate synthase (269 aa).

This sequence belongs to the TrpC family.

The enzyme catalyses 1-(2-carboxyphenylamino)-1-deoxy-D-ribulose 5-phosphate + H(+) = (1S,2R)-1-C-(indol-3-yl)glycerol 3-phosphate + CO2 + H2O. It participates in amino-acid biosynthesis; L-tryptophan biosynthesis; L-tryptophan from chorismate: step 4/5. The protein is Indole-3-glycerol phosphate synthase of Roseiflexus castenholzii (strain DSM 13941 / HLO8).